Consider the following 176-residue polypeptide: Nucleoside triphosphate/diphosphate phosphatase (176 aa).

The Proton donor role is filled by arginine 23. Mg(2+) is bound by residues asparagine 87, aspartate 103, aspartate 105, aspartate 107, aspartate 120, and glutamate 123.

The protein belongs to the Ntdp family. Mg(2+) serves as cofactor.

It catalyses the reaction a ribonucleoside 5'-triphosphate + H2O = a ribonucleoside 5'-diphosphate + phosphate + H(+). The enzyme catalyses a ribonucleoside 5'-diphosphate + H2O = a ribonucleoside 5'-phosphate + phosphate + H(+). In terms of biological role, has nucleoside phosphatase activity towards nucleoside triphosphates and nucleoside diphosphates. The polypeptide is Nucleoside triphosphate/diphosphate phosphatase (Bacillus mycoides (strain KBAB4) (Bacillus weihenstephanensis)).